Here is a 484-residue protein sequence, read N- to C-terminus: MDFSSITVLCIGDIMLDRFVYGEMERISPEAPVPVLRLGRTREMPGGVGNVANNILSLGGRAILVGLVGRDTPGQALRGLLGQRPGLTDALVETGARPTICKTRFIAANQQVVRADEESRLALQPDEATSLIAAIDAHIGAADIVVLSDYAKGTCADPVIAHAIATARARGIAVFVDPKSRDFARYRGASCITPNARELAQATGLPIDTDAEIEQAARAAMARADAVAILATRSEKGMALVEREGGVQIVPARAREVFDVSGAGDTVIAALALAAGSGMTLAQAMHVANAAAGVVVGKLGTATADIAEVLAELNAQDADAMGGTPSLLSRAQAAEQVARWKAQGLRVGFTNGCFDIIHPGHVALLAAARRACDRLIVALNDDASVARLKGPERPVNPLEDRARVMAAIRHVDAVVAFGEDTPLELIRLLLPDVLVKGADYRPDQVVGADVVRQAGGRVVLADLEDGKSTTRTIGRIRAAGAADR.

Residues 1–320 form a ribokinase region; it reads MDFSSITVLC…AELNAQDADA (320 aa). 195-198 serves as a coordination point for ATP; sequence NARE. D265 is an active-site residue. The segment at 349-484 is cytidylyltransferase; sequence FTNGCFDIIH…RIRAAGAADR (136 aa).

It in the N-terminal section; belongs to the carbohydrate kinase PfkB family. In the C-terminal section; belongs to the cytidylyltransferase family. Homodimer.

It carries out the reaction D-glycero-beta-D-manno-heptose 7-phosphate + ATP = D-glycero-beta-D-manno-heptose 1,7-bisphosphate + ADP + H(+). It catalyses the reaction D-glycero-beta-D-manno-heptose 1-phosphate + ATP + H(+) = ADP-D-glycero-beta-D-manno-heptose + diphosphate. Its pathway is nucleotide-sugar biosynthesis; ADP-L-glycero-beta-D-manno-heptose biosynthesis; ADP-L-glycero-beta-D-manno-heptose from D-glycero-beta-D-manno-heptose 7-phosphate: step 1/4. The protein operates within nucleotide-sugar biosynthesis; ADP-L-glycero-beta-D-manno-heptose biosynthesis; ADP-L-glycero-beta-D-manno-heptose from D-glycero-beta-D-manno-heptose 7-phosphate: step 3/4. Catalyzes the phosphorylation of D-glycero-D-manno-heptose 7-phosphate at the C-1 position to selectively form D-glycero-beta-D-manno-heptose-1,7-bisphosphate. Its function is as follows. Catalyzes the ADP transfer from ATP to D-glycero-beta-D-manno-heptose 1-phosphate, yielding ADP-D-glycero-beta-D-manno-heptose. The chain is Bifunctional protein HldE from Gluconacetobacter diazotrophicus (strain ATCC 49037 / DSM 5601 / CCUG 37298 / CIP 103539 / LMG 7603 / PAl5).